The sequence spans 407 residues: Phosphopentomutase (407 aa).

Mn(2+) contacts are provided by Asp-10, Asp-306, His-311, Asp-347, His-348, and His-359.

Belongs to the phosphopentomutase family. Mn(2+) is required as a cofactor.

Its subcellular location is the cytoplasm. It carries out the reaction 2-deoxy-alpha-D-ribose 1-phosphate = 2-deoxy-D-ribose 5-phosphate. The enzyme catalyses alpha-D-ribose 1-phosphate = D-ribose 5-phosphate. The protein operates within carbohydrate degradation; 2-deoxy-D-ribose 1-phosphate degradation; D-glyceraldehyde 3-phosphate and acetaldehyde from 2-deoxy-alpha-D-ribose 1-phosphate: step 1/2. Its function is as follows. Isomerase that catalyzes the conversion of deoxy-ribose 1-phosphate (dRib-1-P) and ribose 1-phosphate (Rib-1-P) to deoxy-ribose 5-phosphate (dRib-5-P) and ribose 5-phosphate (Rib-5-P), respectively. In Salmonella paratyphi A (strain AKU_12601), this protein is Phosphopentomutase.